A 279-amino-acid chain; its full sequence is MNQSHKPPSIVVGIDGSKPAVQAALWAVDEAASRDIPLRLLYAIEPDDPGYAAHGAAARKLAAAENAVRYAFTAVEAADRPVKVEVEITQERPVTSLIRASAAAALVCVGAIGVHHFRPERVGSTAAALALSAQCPVAIVRPHRVPIGRDAAWIVVEADGSSDIGVLLGAVMAEARLRDSPVRVVTCRQSGVGDTGDDVRASLDRWLARWQPRYPDVRVQSAAVHGELLDYLAGLGRSVHMVVLSASDQEHVEQLVGAPGNAVLQEAGCTLLVVGQQYL.

It belongs to the universal stress protein A family.

The polypeptide is Universal stress protein MT2087 (Mycobacterium tuberculosis (strain CDC 1551 / Oshkosh)).